The following is a 279-amino-acid chain: Protein K1 (279 aa).

An N-terminal signal peptide occupies residues 1 to 18 (MFLYVVCSLAVCFRGLLS). Topologically, residues 19–220 (LSLQSSPNLC…TYLYIQEHLL (202 aa)) are extracellular. A helical membrane pass occupies residues 221-241 (VFMTLVALIGTMCGILGTIIF). At 242–279 (AHCQKQRDSNKTVPQQLQDYYSLHDLCTEDYTQPVDWY) the chain is on the cytoplasmic side.

As to quaternary structure, homooligomer.

It localises to the host membrane. In terms of biological role, promotes host cell survival pathways and may contribute to pathogenesis by preventing infected cells from undergoing apoptosis. Acts in host B-cells by mimicking the activated B-cell receptor complex. The cytoplasmic tail of K1 can induce the phosphorylation of a number of different kinases, leading to the activation of survival signaling pathways. This is Protein K1 (K1) from Human herpesvirus 8 type P (isolate GK18) (HHV-8).